The sequence spans 709 residues: Elongation factor G (709 aa).

In terms of domain architecture, tr-type G spans 10 to 286; the sequence is NKVRNIGIMA…AVVDFLPSPL (277 aa). Residues 19-26, 83-87, and 137-140 contribute to the GTP site; these read AHIDAGKT, DTPGH, and NKMD.

This sequence belongs to the TRAFAC class translation factor GTPase superfamily. Classic translation factor GTPase family. EF-G/EF-2 subfamily.

It localises to the cytoplasm. Functionally, catalyzes the GTP-dependent ribosomal translocation step during translation elongation. During this step, the ribosome changes from the pre-translocational (PRE) to the post-translocational (POST) state as the newly formed A-site-bound peptidyl-tRNA and P-site-bound deacylated tRNA move to the P and E sites, respectively. Catalyzes the coordinated movement of the two tRNA molecules, the mRNA and conformational changes in the ribosome. The protein is Elongation factor G of Corynebacterium glutamicum (strain R).